The following is a 373-amino-acid chain: Probable tRNA sulfurtransferase (373 aa).

The THUMP domain occupies 54–158 (NKNIEELSKV…NDVAYFYHKI (105 aa)). Residues 176–177 (LF), 201–202 (NF), lysine 256, glycine 278, and glutamine 287 contribute to the ATP site.

This sequence belongs to the ThiI family.

The protein localises to the cytoplasm. The catalysed reaction is [ThiI sulfur-carrier protein]-S-sulfanyl-L-cysteine + a uridine in tRNA + 2 reduced [2Fe-2S]-[ferredoxin] + ATP + H(+) = [ThiI sulfur-carrier protein]-L-cysteine + a 4-thiouridine in tRNA + 2 oxidized [2Fe-2S]-[ferredoxin] + AMP + diphosphate. It carries out the reaction [ThiS sulfur-carrier protein]-C-terminal Gly-Gly-AMP + S-sulfanyl-L-cysteinyl-[cysteine desulfurase] + AH2 = [ThiS sulfur-carrier protein]-C-terminal-Gly-aminoethanethioate + L-cysteinyl-[cysteine desulfurase] + A + AMP + 2 H(+). Its pathway is cofactor biosynthesis; thiamine diphosphate biosynthesis. Its function is as follows. Catalyzes the ATP-dependent transfer of a sulfur to tRNA to produce 4-thiouridine in position 8 of tRNAs, which functions as a near-UV photosensor. Also catalyzes the transfer of sulfur to the sulfur carrier protein ThiS, forming ThiS-thiocarboxylate. This is a step in the synthesis of thiazole, in the thiamine biosynthesis pathway. The sulfur is donated as persulfide by IscS. In Saccharolobus islandicus (strain M.16.27) (Sulfolobus islandicus), this protein is Probable tRNA sulfurtransferase.